The following is a 144-amino-acid chain: Large ribosomal subunit protein uL15 (144 aa).

A disordered region spans residues 1–53 (MRLNTLSPAEGAKHAPKRVGRGIGSGLGKTAGRGHKGQNSRSGGGVRRGFEGG). Residues 21 to 31 (RGIGSGLGKTA) are compositionally biased toward gly residues.

Belongs to the universal ribosomal protein uL15 family. In terms of assembly, part of the 50S ribosomal subunit.

Binds to the 23S rRNA. The polypeptide is Large ribosomal subunit protein uL15 (Serratia proteamaculans (strain 568)).